An 835-amino-acid polypeptide reads, in one-letter code: Translation initiation factor IF-2 (835 aa).

The segment at 1-240 (MSDSDGKKTL…RKQERARQKA (240 aa)) is disordered. Residues 50–59 (AGKGGAGGVA) show a composition bias toward gly residues. Residues 86–152 (KAREAEEAAQ…AEAAKKRAAA (67 aa)) are compositionally biased toward basic and acidic residues. Residues 153-169 (DKAAAAAPKSDAGVAPA) are compositionally biased toward low complexity. The span at 184 to 205 (RKAEREREERGRGAKGRNDGGR) shows a compositional bias: basic and acidic residues. The region spanning 332-500 (PRPPVITIMG…AIALQAEILE (169 aa)) is the tr-type G domain. Positions 341 to 348 (GHVDHGKT) are G1. 341–348 (GHVDHGKT) contributes to the GTP binding site. Residues 366–370 (GITQH) are G2. The interval 388-391 (DTPG) is G3. GTP is bound by residues 388 to 392 (DTPGH) and 442 to 445 (NKID). The tract at residues 442-445 (NKID) is G4. A G5 region spans residues 478 to 480 (SAH).

It belongs to the TRAFAC class translation factor GTPase superfamily. Classic translation factor GTPase family. IF-2 subfamily.

It is found in the cytoplasm. In terms of biological role, one of the essential components for the initiation of protein synthesis. Protects formylmethionyl-tRNA from spontaneous hydrolysis and promotes its binding to the 30S ribosomal subunits. Also involved in the hydrolysis of GTP during the formation of the 70S ribosomal complex. In Ruegeria sp. (strain TM1040) (Silicibacter sp.), this protein is Translation initiation factor IF-2.